The sequence spans 453 residues: tRNA (guanine-N(7)-)-methyltransferase non-catalytic subunit TRM82 (453 aa).

A disordered region spans residues 69 to 99 (ENEEKGIKKSKTNEGNTIEKKHDAKIPVPGP). 2 WD repeats span residues 103–143 (PIYS…NDNC) and 244–286 (GHKE…DEFD).

This sequence belongs to the WD repeat TRM82 family. Forms a heterodimer with the catalytic subunit TRM8.

The protein resides in the nucleus. It participates in tRNA modification; N(7)-methylguanine-tRNA biosynthesis. In terms of biological role, required for the formation of N(7)-methylguanine at position 46 (m7G46) in tRNA. In the complex, it is required to stabilize and induce conformational changes of the catalytic subunit. This Vanderwaltozyma polyspora (strain ATCC 22028 / DSM 70294 / BCRC 21397 / CBS 2163 / NBRC 10782 / NRRL Y-8283 / UCD 57-17) (Kluyveromyces polysporus) protein is tRNA (guanine-N(7)-)-methyltransferase non-catalytic subunit TRM82.